The chain runs to 366 residues: Septin-1 (366 aa).

Residues 22–295 form the Septin-type G domain; the sequence is KGFDFTLMVA…EGYRARCLQS (274 aa). The interval 32–39 is G1 motif; it reads GESGLGKS. Residues 32–39, T66, G92, and 171–179 each bind GTP; these read GESGLGKS and KADALMPRE. The segment at 89–92 is G3 motif; the sequence is DTPG. Residues 170–173 are G4 motif; the sequence is GKAD. At S206 the chain carries Phosphoserine. Residues G229 and R244 each contribute to the GTP site. S247 bears the Phosphoserine mark. T250 is modified (phosphothreonine). A phosphoserine; by AURKB mark is found at S306 and S314. A disordered region spans residues 347 to 366; it reads EKMQAQMQQSQAQGEQSDVL. Positions 349–366 are enriched in low complexity; sequence MQAQMQQSQAQGEQSDVL.

It belongs to the TRAFAC class TrmE-Era-EngA-EngB-Septin-like GTPase superfamily. Septin GTPase family. In terms of assembly, septins polymerize into heterooligomeric protein complexes that form filaments, and can associate with cellular membranes, actin filaments and microtubules. GTPase activity is required for filament formation. Interacts with AURKB.

Its subcellular location is the cytoplasm. It is found in the cytoskeleton. The protein resides in the microtubule organizing center. The protein localises to the centrosome. It localises to the midbody. Functionally, filament-forming cytoskeletal GTPase. May play a role in cytokinesis (Potential). This Mus musculus (Mouse) protein is Septin-1.